We begin with the raw amino-acid sequence, 338 residues long: Lipoate-protein ligase A (338 aa).

Positions 29–216 constitute a BPL/LPL catalytic domain; the sequence is PATQRVLFLW…AFFAHYGERV (188 aa). ATP contacts are provided by residues R71, 76 to 79, and K134; that span reads GAVF. K134 provides a ligand contact to (R)-lipoate.

It belongs to the LplA family. As to quaternary structure, monomer.

It is found in the cytoplasm. The enzyme catalyses L-lysyl-[lipoyl-carrier protein] + (R)-lipoate + ATP = N(6)-[(R)-lipoyl]-L-lysyl-[lipoyl-carrier protein] + AMP + diphosphate + H(+). The protein operates within protein modification; protein lipoylation via exogenous pathway; protein N(6)-(lipoyl)lysine from lipoate: step 1/2. It functions in the pathway protein modification; protein lipoylation via exogenous pathway; protein N(6)-(lipoyl)lysine from lipoate: step 2/2. Its function is as follows. Catalyzes both the ATP-dependent activation of exogenously supplied lipoate to lipoyl-AMP and the transfer of the activated lipoyl onto the lipoyl domains of lipoate-dependent enzymes. The protein is Lipoate-protein ligase A of Escherichia coli (strain 55989 / EAEC).